The primary structure comprises 295 residues: Small ribosomal subunit protein uS2 (295 aa).

Ser-2 carries the post-translational modification N-acetylserine. Ser-43 is modified (phosphoserine). At Lys-52 the chain carries N6-acetyllysine. The interaction with PPP1R16B stretch occupies residues 54–113; sequence TWEKLLLAARAIVAIENPADVSVISSRNTGQRAVLKFAAATGATPIAGRFTPGTFTNQIQ. N6-acetyllysine; alternate is present on Lys-89. Lys-89 participates in a covalent cross-link: Glycyl lysine isopeptide (Lys-Gly) (interchain with G-Cter in SUMO2); alternate. Phosphothreonine is present on Thr-97. Laminin-binding stretches follow at residues 161–180 and 205–229; these read IPCNNKGAHSVGLMWWMLAR and RDPEEIEKEEQAAAEKAVTKEEFQG. [DE]-W-[ST] repeat units lie at residues 230-232, 247-249, 266-268, 275-277, and 293-295; these read EWT, DWS, and EWS. The segment at 242–295 is laminin-binding; that stretch reads QPEVADWSEGVQVPSVPIQQFPTEDWSAQPATEDWSAAPTAQATEWVGATTEWS. A disordered region spans residues 266 to 295; sequence DWSAQPATEDWSAAPTAQATEWVGATTEWS.

The protein belongs to the universal ribosomal protein uS2 family. As to quaternary structure, monomer (37LRP) and homodimer (67LR). Component of the small ribosomal subunit. Mature ribosomes consist of a small (40S) and a large (60S) subunit. The 40S subunit contains about 33 different proteins and 1 molecule of RNA (18S). The 60S subunit contains about 49 different proteins and 3 molecules of RNA (28S, 5.8S and 5S). Interacts with RPS21. Interacts with several laminins including at least LAMB1. Interacts with MDK. The mature dimeric form interacts with PPP1R16B (via its fourth ankyrin repeat). Interacts with PPP1CA only in the presence of PPP1R16B. In terms of processing, acylated. Acylation may be a prerequisite for conversion of the monomeric 37 kDa laminin receptor precursor (37LRP) to the mature dimeric 67 kDa laminin receptor (67LR), and may provide a mechanism for membrane association. Post-translationally, cleaved by stromelysin-3 (ST3) at the cell surface. Cleavage by stromelysin-3 may be a mechanism to alter cell-extracellular matrix interactions. In terms of tissue distribution, expressed in most neurons and in a subset of glial cells. The overall distribution of LR correlates with that reported for laminin-1 but also with brain regions classically associated with prion-related neurodegeneration.

It localises to the cell membrane. It is found in the cytoplasm. The protein localises to the nucleus. Its function is as follows. Required for the assembly and/or stability of the 40S ribosomal subunit. Required for the processing of the 20S rRNA-precursor to mature 18S rRNA in a late step of the maturation of 40S ribosomal subunits. Also functions as a cell surface receptor for laminin. Plays a role in cell adhesion to the basement membrane and in the consequent activation of signaling transduction pathways. May play a role in cell fate determination and tissue morphogenesis. Also acts as a receptor for several other ligands, including the pathogenic prion protein, viruses, and bacteria. Acts as a PPP1R16B-dependent substrate of PPP1CA. This is Small ribosomal subunit protein uS2 (Rpsa) from Rattus norvegicus (Rat).